Consider the following 970-residue polypeptide: Serine/threonine-protein kinase PLK4 (970 aa).

In terms of domain architecture, Protein kinase spans 12-265 (FKVGNLLGKG…LSSVLDHPFM (254 aa)). Residues 18–26 (LGKGSFAGV) and lysine 41 contribute to the ATP site. N6-acetyllysine is present on residues lysine 45 and lysine 46. Catalysis depends on aspartate 136, which acts as the Proton acceptor. Disordered regions lie at residues 323 to 458 (TVFP…NHLC) and 497 to 538 (SISP…HSVK). Positions 328–356 (NKSSTDFSSSGDGNSFYTQWGNQETSNSG) are enriched in polar residues. A compositionally biased stretch (basic and acidic residues) spans 360–369 (VIQDAEERPH). Residues 379-393 (SDRSGTSNSQSQAKT) are compositionally biased toward polar residues. Serine 401 bears the Phosphoserine mark. Residues 438–454 (SSSSGSFERPDNNQALS) are compositionally biased toward polar residues. The span at 504–515 (FQGHPDLQKDTS) shows a compositional bias: basic and acidic residues. The Cryptic POLO box 1 (CPB1) domain maps to 586–699 (TLRSITSPLV…SRFVQLVRSK (114 aa)). Serine 665 carries the phosphoserine modification. One can recognise a Cryptic POLO box 2 (CPB2) domain in the interval 700–813 (SPKITYFTRY…GRKPGSTSSP (114 aa)). Positions 808 to 828 (GSTSSPKALSPPPSVDSNYPT) are disordered. Residue serine 817 is modified to Phosphoserine. The 79-residue stretch at 886 to 964 (QLLKSVFVKN…LSSILLMFSN (79 aa)) folds into the POLO box domain.

It belongs to the protein kinase superfamily. Ser/Thr protein kinase family. CDC5/Polo subfamily. In terms of assembly, homodimer. Interacts with CEP152 (via N-terminus). Interacts with CEP78; this interaction may be important for proper PLK4 localization to the centriole and PLK4-induced overduplication of centrioles. Interacts with CEP131. Interacts simultaneously with TENT5C and CEP192. Interacts with TENT5C; this interaction leads to the TENT5C recruitment in the centrosome. Interacts with CEP85; this interaction may be important in cell migration and centriole assembly. In terms of processing, acetylation by KAT2A and KAT2B impairs kinase activity by shifting the kinase to an inactive conformation. Post-translationally, ubiquitinated; leading to its degradation by the proteasome. Deubiquitinated by USP54; leading to PLK4 stabilization. Tyrosine-phosphorylated by TEC.

It localises to the cytoplasm. It is found in the cytoskeleton. The protein localises to the microtubule organizing center. Its subcellular location is the centrosome. The protein resides in the centriole. It localises to the nucleus. It is found in the nucleolus. The protein localises to the cleavage furrow. The catalysed reaction is L-seryl-[protein] + ATP = O-phospho-L-seryl-[protein] + ADP + H(+). It carries out the reaction L-threonyl-[protein] + ATP = O-phospho-L-threonyl-[protein] + ADP + H(+). Its function is as follows. Serine/threonine-protein kinase that plays a central role in centriole duplication. Able to trigger procentriole formation on the surface of the parental centriole cylinder, leading to the recruitment of centriole biogenesis proteins such as SASS6, CPAP, CCP110, CEP135 and gamma-tubulin. When overexpressed, it is able to induce centrosome amplification through the simultaneous generation of multiple procentrioles adjoining each parental centriole during S phase. Phosphorylates 'Ser-151' of FBXW5 during the G1/S transition, leading to inhibit FBXW5 ability to ubiquitinate SASS6. Its central role in centriole replication suggests a possible role in tumorigenesis, centrosome aberrations being frequently observed in tumors. Also involved in deuterosome-mediated centriole amplification in multiciliated that can generate more than 100 centrioles. Also involved in trophoblast differentiation by phosphorylating HAND1, leading to disrupt the interaction between HAND1 and MDFIC and activate HAND1. Phosphorylates CDC25C and CHEK2. Required for the recruitment of STIL to the centriole and for STIL-mediated centriole amplification. Phosphorylates CEP131 at 'Ser-78' and PCM1 at 'Ser-372' which is essential for proper organization and integrity of centriolar satellites. In Homo sapiens (Human), this protein is Serine/threonine-protein kinase PLK4.